The chain runs to 463 residues: Cysteine--tRNA ligase (463 aa).

Cysteine 28 contributes to the Zn(2+) binding site. Residues 30-40 (ITPYDLCHIGH) carry the 'HIGH' region motif. 3 residues coordinate Zn(2+): cysteine 211, histidine 236, and glutamate 240. The 'KMSKS' region signature appears at 268–272 (KMSKS). Position 271 (lysine 271) interacts with ATP.

Belongs to the class-I aminoacyl-tRNA synthetase family. As to quaternary structure, monomer. Zn(2+) is required as a cofactor.

The protein resides in the cytoplasm. It catalyses the reaction tRNA(Cys) + L-cysteine + ATP = L-cysteinyl-tRNA(Cys) + AMP + diphosphate. This chain is Cysteine--tRNA ligase, found in Wigglesworthia glossinidia brevipalpis.